Here is a 426-residue protein sequence, read N- to C-terminus: Pistil-specific extensin-like protein (426 aa).

Residues 1-23 form the signal peptide; it reads MAVIISSKVLLIQLFVLVLGSFS. 2 disordered regions span residues 56-109 and 121-254; these read GPTF…GSKL and NLPD…AAEP. 4 stretches are compositionally biased toward pro residues: residues 60-94, 123-161, 168-224, and 231-254; these read VLPPPSPLPSPPPPSPSPPPPSPSPPPPSTIPLIP, PDVPPIGGGPPVNQPKPSSPSPLVKPPPPPPSPCKPSPP, PPQP…PPPP, and LLPPPPPVAYPPVMTPSPSPAAEP. 3 tandem repeats follow at residues 69–73, 76–80, and 83–87. The interval 69–182 is 4 X 5 AA repeats of S-P(4); sequence SPPPPSPSPP…PAKQPSPPPP (114 aa). Residues 178–182 form repeat 4; sequence SPPPP. N310 carries N-linked (GlcNAc...) asparagine glycosylation.

As to expression, pistil (stigma and style tissue).

In Nicotiana tabacum (Common tobacco), this protein is Pistil-specific extensin-like protein.